The sequence spans 332 residues: Glycerol-3-phosphate dehydrogenase [NAD(P)+] (332 aa).

Residues S11, F12, K32, and K106 each coordinate NADPH. Positions 106, 137, and 139 each coordinate sn-glycerol 3-phosphate. A141 is a binding site for NADPH. 5 residues coordinate sn-glycerol 3-phosphate: K192, D245, S255, R256, and N257. Catalysis depends on K192, which acts as the Proton acceptor. R256 serves as a coordination point for NADPH. NADPH is bound by residues V280 and E282.

The protein belongs to the NAD-dependent glycerol-3-phosphate dehydrogenase family.

The protein localises to the cytoplasm. The catalysed reaction is sn-glycerol 3-phosphate + NAD(+) = dihydroxyacetone phosphate + NADH + H(+). It catalyses the reaction sn-glycerol 3-phosphate + NADP(+) = dihydroxyacetone phosphate + NADPH + H(+). It functions in the pathway membrane lipid metabolism; glycerophospholipid metabolism. Its function is as follows. Catalyzes the reduction of the glycolytic intermediate dihydroxyacetone phosphate (DHAP) to sn-glycerol 3-phosphate (G3P), the key precursor for phospholipid synthesis. The polypeptide is Glycerol-3-phosphate dehydrogenase [NAD(P)+] (Staphylococcus epidermidis (strain ATCC 12228 / FDA PCI 1200)).